The chain runs to 406 residues: 4-hydroxy-3-methylbut-2-enyl diphosphate reductase (406 aa).

Residue C66 coordinates [4Fe-4S] cluster. H96 provides a ligand contact to (2E)-4-hydroxy-3-methylbut-2-enyl diphosphate. H96 contributes to the dimethylallyl diphosphate binding site. H96 provides a ligand contact to isopentenyl diphosphate. C157 lines the [4Fe-4S] cluster pocket. A (2E)-4-hydroxy-3-methylbut-2-enyl diphosphate-binding site is contributed by H185. H185 is a binding site for dimethylallyl diphosphate. An isopentenyl diphosphate-binding site is contributed by H185. Residue E187 is the Proton donor of the active site. T250 contacts (2E)-4-hydroxy-3-methylbut-2-enyl diphosphate. Position 288 (C288) interacts with [4Fe-4S] cluster. (2E)-4-hydroxy-3-methylbut-2-enyl diphosphate-binding residues include S317, S318, N319, and S379. 4 residues coordinate dimethylallyl diphosphate: S317, S318, N319, and S379. S317, S318, N319, and S379 together coordinate isopentenyl diphosphate.

The protein belongs to the IspH family. The cofactor is [4Fe-4S] cluster.

It catalyses the reaction isopentenyl diphosphate + 2 oxidized [2Fe-2S]-[ferredoxin] + H2O = (2E)-4-hydroxy-3-methylbut-2-enyl diphosphate + 2 reduced [2Fe-2S]-[ferredoxin] + 2 H(+). The enzyme catalyses dimethylallyl diphosphate + 2 oxidized [2Fe-2S]-[ferredoxin] + H2O = (2E)-4-hydroxy-3-methylbut-2-enyl diphosphate + 2 reduced [2Fe-2S]-[ferredoxin] + 2 H(+). It participates in isoprenoid biosynthesis; dimethylallyl diphosphate biosynthesis; dimethylallyl diphosphate from (2E)-4-hydroxy-3-methylbutenyl diphosphate: step 1/1. Its pathway is isoprenoid biosynthesis; isopentenyl diphosphate biosynthesis via DXP pathway; isopentenyl diphosphate from 1-deoxy-D-xylulose 5-phosphate: step 6/6. Functionally, catalyzes the conversion of 1-hydroxy-2-methyl-2-(E)-butenyl 4-diphosphate (HMBPP) into a mixture of isopentenyl diphosphate (IPP) and dimethylallyl diphosphate (DMAPP). Acts in the terminal step of the DOXP/MEP pathway for isoprenoid precursor biosynthesis. The chain is 4-hydroxy-3-methylbut-2-enyl diphosphate reductase from Synechococcus sp. (strain RCC307).